A 622-amino-acid polypeptide reads, in one-letter code: 3-(3-hydroxy-phenyl)propionate/3-hydroxycinnamic acid hydroxylase (622 aa).

FAD is bound by residues 20-49 (DVAIIGAGPVGLMIANYLGLQGVRVVVLEK) and 288-298 (FRVDRVLLAGD).

It belongs to the PheA/TfdB FAD monooxygenase family. FAD is required as a cofactor.

It carries out the reaction 3-(3-hydroxyphenyl)propanoate + NADH + O2 + H(+) = 3-(2,3-dihydroxyphenyl)propanoate + NAD(+) + H2O. The enzyme catalyses (2E)-3-(3-hydroxyphenyl)prop-2-enoate + NADH + O2 + H(+) = (2E)-3-(2,3-dihydroxyphenyl)prop-2-enoate + NAD(+) + H2O. The protein operates within aromatic compound metabolism; 3-phenylpropanoate degradation. Catalyzes the insertion of one atom of molecular oxygen into position 2 of the phenyl ring of 3-(3-hydroxyphenyl)propionate (3-HPP) and hydroxycinnamic acid (3HCI). In Paraburkholderia xenovorans (strain LB400), this protein is 3-(3-hydroxy-phenyl)propionate/3-hydroxycinnamic acid hydroxylase.